Reading from the N-terminus, the 430-residue chain is Enolase (430 aa).

Gln-165 contacts (2R)-2-phosphoglycerate. Catalysis depends on Glu-207, which acts as the Proton donor. Residues Asp-244, Glu-287, and Asp-314 each contribute to the Mg(2+) site. (2R)-2-phosphoglycerate contacts are provided by Lys-339, Arg-368, Ser-369, and Lys-390. The active-site Proton acceptor is the Lys-339.

This sequence belongs to the enolase family. As to quaternary structure, component of the RNA degradosome, a multiprotein complex involved in RNA processing and mRNA degradation. Mg(2+) is required as a cofactor.

Its subcellular location is the cytoplasm. It localises to the secreted. The protein localises to the cell surface. It catalyses the reaction (2R)-2-phosphoglycerate = phosphoenolpyruvate + H2O. It functions in the pathway carbohydrate degradation; glycolysis; pyruvate from D-glyceraldehyde 3-phosphate: step 4/5. Its function is as follows. Catalyzes the reversible conversion of 2-phosphoglycerate (2-PG) into phosphoenolpyruvate (PEP). It is essential for the degradation of carbohydrates via glycolysis. The sequence is that of Enolase from Stenotrophomonas maltophilia (strain K279a).